Consider the following 531-residue polypeptide: MKCHYEALGVRRDASEEELKKAYRKLALKWHPDKNLDNAAEAAEQFKLIQAAYDVLSDPQERAWYDNHREALLKGGFDGEYQDDSLDLLRYFTVTCYSGYGDDEKGFYTVYRNVFEMIAKEELESVLEEEVDDFPTFGDSQSDYDTVVHPFYAYWQSFCTQKNFAWKEEYDTRQASNRWEKRAMEKENKKIRDKARKEKNELVRQLVAFIRKRDKRVQAHRKLVEEQNAEKARKAEEMRRQQKLKQAKLVEQYREQSWMTMANLEKELQEMEARYEKEFGDGSDENEMEEHELKDEEDGKDSDEAEDAELYDDLYCPACDKSFKTEKAMKNHEKSKKHREMVALLKQQLEEEEENFSRPQIDENPLDDNSEEEMEDAPKQKLSKKQKKKKQKPAQNYDDNFNVNGPGEGVKVDPEDTNLNQDSAKELEDSPQENVSVTEIIKPCDDPKSEAKSVPKPKGKKTKDMKKPVRVPAEPQTMSVLISCTTCHSEFPSRNKLFDHLKATGHARAPSSSSLNSATSSQSKKEKRKNR.

One can recognise a J domain in the interval 3–69 (CHYEALGVRR…QERAWYDNHR (67 aa)). Disordered stretches follow at residues 279 to 311 (FGDGSDENEMEEHELKDEEDGKDSDEAEDAELY), 327 to 474 (KAMK…VPAE), and 502 to 531 (KATGHARAPSSSSLNSATSSQSKKEKRKNR). Positions 281–311 (DGSDENEMEEHELKDEEDGKDSDEAEDAELY) are enriched in acidic residues. A phosphoserine mark is found at S283 and S302. The segment at 314-338 (LYCPACDKSFKTEKAMKNHEKSKKH) adopts a C2H2-type 1 zinc-finger fold. Residues 364–375 (NPLDDNSEEEME) show a composition bias toward acidic residues. At S370 the chain carries Phosphoserine. The span at 381 to 392 (KLSKKQKKKKQK) shows a compositional bias: basic residues. Over residues 393-403 (PAQNYDDNFNV) the composition is skewed to polar residues. Residues 442-453 (KPCDDPKSEAKS) are compositionally biased toward basic and acidic residues. Positions 455-464 (PKPKGKKTKD) are enriched in basic residues. Residues 482 to 506 (ISCTTCHSEFPSRNKLFDHLKATGH) form a C2H2-type 2 zinc finger. S511 is modified (phosphoserine). Residues 511–522 (SSSSLNSATSSQ) are compositionally biased toward low complexity.

As to quaternary structure, interacts with HSPA8, PA2G4 and ZNF622. As to expression, expressed in brain, placenta, kidney and pancreas.

The protein resides in the cytoplasm. It is found in the nucleus. The protein localises to the nucleolus. Its function is as follows. May act as a co-chaperone for HSP70. May play a role in ribosomal RNA (rRNA) biogenesis, possibly in the maturation of the 60S subunit. Binds the precursor 45S rRNA. In Homo sapiens (Human), this protein is DnaJ homolog subfamily C member 21 (DNAJC21).